We begin with the raw amino-acid sequence, 454 residues long: Glutamyl-tRNA reductase (454 aa).

Residues 49–52 (TCNR), S109, 114–116 (ETQ), and Q120 contribute to the substrate site. The active-site Nucleophile is the C50. 189 to 194 (GAGKMS) is a binding site for NADP(+). The interval 434-454 (NDKNKQTSSSREQVLVSRFPD) is disordered.

This sequence belongs to the glutamyl-tRNA reductase family. As to quaternary structure, homodimer.

It catalyses the reaction (S)-4-amino-5-oxopentanoate + tRNA(Glu) + NADP(+) = L-glutamyl-tRNA(Glu) + NADPH + H(+). It participates in porphyrin-containing compound metabolism; protoporphyrin-IX biosynthesis; 5-aminolevulinate from L-glutamyl-tRNA(Glu): step 1/2. Its function is as follows. Catalyzes the NADPH-dependent reduction of glutamyl-tRNA(Glu) to glutamate 1-semialdehyde (GSA). The protein is Glutamyl-tRNA reductase of Brevibacillus brevis (strain 47 / JCM 6285 / NBRC 100599).